The following is a 367-amino-acid chain: UDP-N-acetylglucosamine--N-acetylmuramyl-(pentapeptide) pyrophosphoryl-undecaprenol N-acetylglucosamine transferase (367 aa).

Residues 15 to 17 (TGG), Asn-127, Arg-163, Ser-191, Ile-249, and Gln-294 each bind UDP-N-acetyl-alpha-D-glucosamine.

The protein belongs to the glycosyltransferase 28 family. MurG subfamily.

It localises to the cell inner membrane. It carries out the reaction di-trans,octa-cis-undecaprenyl diphospho-N-acetyl-alpha-D-muramoyl-L-alanyl-D-glutamyl-meso-2,6-diaminopimeloyl-D-alanyl-D-alanine + UDP-N-acetyl-alpha-D-glucosamine = di-trans,octa-cis-undecaprenyl diphospho-[N-acetyl-alpha-D-glucosaminyl-(1-&gt;4)]-N-acetyl-alpha-D-muramoyl-L-alanyl-D-glutamyl-meso-2,6-diaminopimeloyl-D-alanyl-D-alanine + UDP + H(+). The protein operates within cell wall biogenesis; peptidoglycan biosynthesis. Its function is as follows. Cell wall formation. Catalyzes the transfer of a GlcNAc subunit on undecaprenyl-pyrophosphoryl-MurNAc-pentapeptide (lipid intermediate I) to form undecaprenyl-pyrophosphoryl-MurNAc-(pentapeptide)GlcNAc (lipid intermediate II). In Burkholderia cenocepacia (strain HI2424), this protein is UDP-N-acetylglucosamine--N-acetylmuramyl-(pentapeptide) pyrophosphoryl-undecaprenol N-acetylglucosamine transferase.